Consider the following 833-residue polypeptide: Leucine--tRNA ligase (833 aa).

Residues 41 to 52 (PYPSGAGLHVGH) carry the 'HIGH' region motif. The 'KMSKS' region motif lies at 610-614 (KMSKS). Lys613 is a binding site for ATP.

It belongs to the class-I aminoacyl-tRNA synthetase family.

The protein resides in the cytoplasm. The catalysed reaction is tRNA(Leu) + L-leucine + ATP = L-leucyl-tRNA(Leu) + AMP + diphosphate. This is Leucine--tRNA ligase from Streptococcus gordonii (strain Challis / ATCC 35105 / BCRC 15272 / CH1 / DL1 / V288).